The sequence spans 81 residues: Sulfur carrier protein TusA (81 aa).

The active-site Cysteine persulfide intermediate is the C19.

Belongs to the sulfur carrier protein TusA family.

It is found in the cytoplasm. Its function is as follows. Sulfur carrier protein which probably makes part of a sulfur-relay system. The protein is Sulfur carrier protein TusA of Aeromonas salmonicida (strain A449).